We begin with the raw amino-acid sequence, 352 residues long: SNF1-related protein kinase regulatory subunit gamma-like PV42a (352 aa).

CBS domains are found at residues 24–106 (RNRR…LSDL), 122–196 (LEGL…FDDL), 210–281 (VNDS…ELQT), and 297–352 (KERE…STLS).

The protein belongs to the 5'-AMP-activated protein kinase gamma subunit family. As to expression, expressed highly in rosette leaves, cauline leaves, open flowers, developing siliques and dry seeds, but at a low level in stems and floral buds.

Its function is as follows. Plays redundant role with PV42b in regulating male gametogenesis and pollen tube guidance. In Arabidopsis thaliana (Mouse-ear cress), this protein is SNF1-related protein kinase regulatory subunit gamma-like PV42a (PV42A).